A 436-amino-acid polypeptide reads, in one-letter code: Glucose-1-phosphate adenylyltransferase (436 aa).

Alpha-D-glucose 1-phosphate contacts are provided by residues Tyr112, Gly178, 193–194, and Ser211; that span reads EK.

The protein belongs to the bacterial/plant glucose-1-phosphate adenylyltransferase family. Homotetramer.

It carries out the reaction alpha-D-glucose 1-phosphate + ATP + H(+) = ADP-alpha-D-glucose + diphosphate. It participates in glycan biosynthesis; glycogen biosynthesis. In terms of biological role, involved in the biosynthesis of ADP-glucose, a building block required for the elongation reactions to produce glycogen. Catalyzes the reaction between ATP and alpha-D-glucose 1-phosphate (G1P) to produce pyrophosphate and ADP-Glc. This is Glucose-1-phosphate adenylyltransferase from Histophilus somni (strain 129Pt) (Haemophilus somnus).